The following is a 273-amino-acid chain: 4-hydroxy-tetrahydrodipicolinate reductase (273 aa).

Residues 12-17 (GAGGRM) and Glu-38 each bind NAD(+). Arg-39 is an NADP(+) binding site. NAD(+)-binding positions include 102–104 (GTT) and 126–129 (AANF). Residue His-159 is the Proton donor/acceptor of the active site. His-160 is a binding site for (S)-2,3,4,5-tetrahydrodipicolinate. Lys-163 functions as the Proton donor in the catalytic mechanism. 169–170 (GT) provides a ligand contact to (S)-2,3,4,5-tetrahydrodipicolinate.

The protein belongs to the DapB family. Homotetramer.

The protein localises to the cytoplasm. It carries out the reaction (S)-2,3,4,5-tetrahydrodipicolinate + NAD(+) + H2O = (2S,4S)-4-hydroxy-2,3,4,5-tetrahydrodipicolinate + NADH + H(+). It catalyses the reaction (S)-2,3,4,5-tetrahydrodipicolinate + NADP(+) + H2O = (2S,4S)-4-hydroxy-2,3,4,5-tetrahydrodipicolinate + NADPH + H(+). It participates in amino-acid biosynthesis; L-lysine biosynthesis via DAP pathway; (S)-tetrahydrodipicolinate from L-aspartate: step 4/4. Catalyzes the conversion of 4-hydroxy-tetrahydrodipicolinate (HTPA) to tetrahydrodipicolinate. The sequence is that of 4-hydroxy-tetrahydrodipicolinate reductase from Escherichia fergusonii (strain ATCC 35469 / DSM 13698 / CCUG 18766 / IAM 14443 / JCM 21226 / LMG 7866 / NBRC 102419 / NCTC 12128 / CDC 0568-73).